A 185-amino-acid polypeptide reads, in one-letter code: Large ribosomal subunit protein uL5 (185 aa).

Belongs to the universal ribosomal protein uL5 family. As to quaternary structure, part of the 50S ribosomal subunit; part of the 5S rRNA subcomplex. Contacts the 5S rRNA and the P site tRNA. Forms a bridge to the 30S subunit in the 70S ribosome. Both N-terminus methionine truncation and retention have been observed for this protein. In terms of processing, may be methylated twice, on undetermined residues.

In terms of biological role, this is one of the proteins that bind and probably mediate the attachment of the 5S RNA into the large ribosomal subunit, where it forms part of the central protuberance. In the 70S ribosome it contacts protein S13 of the 30S subunit (bridge B1b), connecting the 2 subunits; this bridge is implicated in subunit movement. Contacts the P site tRNA; the 5S rRNA and some of its associated proteins might help stabilize positioning of ribosome-bound tRNAs. The sequence is that of Large ribosomal subunit protein uL5 from Rhodopseudomonas palustris (strain ATCC BAA-98 / CGA009).